Here is a 193-residue protein sequence, read N- to C-terminus: Probable 3' cyclic ADP-D-ribose synthase ThsB' (193 aa).

In terms of assembly, homodimer.

The enzyme catalyses NAD(+) = 3'cADPR + nicotinamide + H(+). TIR-like domain-containing component of the Thoeris antiviral defense system, composed of ThsA and ThsB and ThsB'. In the presence of NAD(+) produces a signaling molecule that activates cognate ThsA (AC J8G6Z1) to hydrolyze NAD(+). The signaling molecule is a cyclic ADP-D-ribose isomer and may be 3' cyclic ADP-D-ribose (3'cADPR); it is not 2'cADPR. This Bacillus cereus (strain MSX-D12) protein is Probable 3' cyclic ADP-D-ribose synthase ThsB'.